A 502-amino-acid chain; its full sequence is MAPLKLNSRNLSQIAAAGGALVKIPTYQRGRAVKEGIVHIGVGGFHRAHLAVYIDQLMQKHGVNDYAICGVGLQPFDSAMRDALASQDHLYTLIERSAKGSFAHVIGSINSYLFAPDNREAVIAKMAHPDTKIVSLTITESGYYYNENTHELQSEHPDIQFDLDPANEKAPRTTFGFLYAGLTRRYQQGLKPFTVMSCDNMQKNGSITRHMLESFARLRNPEVAEWIAEEGAFPNAMVDRITPQTSETDKTALAEKFGIVDSWPVVTEPFTQWVIEDQFSDGRPPFEKVGVQVVKDVHAVEQFEKHKLRLLNGSHSALGYPGQLAGFQYVHEVMANPLFRKFVWQMMQEEVKPLLPEIPGVDIDEYCNTLIERFTNPTIMDQLPRICLNASGKIPQFIMPSIAEAIWETGPFRRLCFVAAAWFHYIKGVDDRGKPFEVVDPMREELQAKARAGGNDPSELLSIKSLFGDDLRNDERFLREITTAMNDIARDGIMKTLPKYIN.

37-48 (IVHIGVGGFHRA) provides a ligand contact to NAD(+).

It belongs to the mannitol dehydrogenase family. Monomer.

It catalyses the reaction D-mannitol + NAD(+) = D-fructose + NADH + H(+). In terms of biological role, catalyzes the NAD(H)-dependent interconversion of D-fructose and D-mannitol in the mannitol metabolic pathway. The sequence is that of Mannitol 2-dehydrogenase from Aspergillus fumigatus (strain CBS 144.89 / FGSC A1163 / CEA10) (Neosartorya fumigata).